A 112-amino-acid chain; its full sequence is Cytochrome c6 (112 aa).

The first 25 residues, 1–25, serve as a signal peptide directing secretion; sequence MKTLLTILALTLVTLTTWLSTPAFA. Heme c is bound by residues cysteine 39, cysteine 42, histidine 43, and methionine 83.

It belongs to the cytochrome c family. PetJ subfamily. Monomer. Binds 1 heme c group covalently per subunit.

Its subcellular location is the cellular thylakoid lumen. Its function is as follows. Functions as an electron carrier between membrane-bound cytochrome b6-f and photosystem I in oxygenic photosynthesis. This Synechococcus sp. (strain ATCC 27167 / PCC 6312) protein is Cytochrome c6.